The sequence spans 65 residues: uncharacterized protein (65 aa).

The next 2 membrane-spanning stretches (helical) occupy residues 4-24 (AWLF…DKVL) and 39-59 (LPIP…FIVF).

The protein resides in the membrane. This is an uncharacterized protein from Streptococcus pneumoniae serotype 2 (strain D39 / NCTC 7466).